Here is a 251-residue protein sequence, read N- to C-terminus: Gamma-interferon-inducible lysosomal thiol reductase (251 aa).

The N-terminal stretch at 1 to 21 (MFGFRLSVLLFAVCSLSACSC) is a signal peptide. A Saposin A-type domain is found at 22–60 (MFVNSCKYPPSQWCDSRDIAAQCGVLEQCMKFNASPVTV). C68 and C71 are joined by a disulfide. Residue N108 is glycosylated (N-linked (GlcNAc...) asparagine).

Belongs to the GILT family. As to quaternary structure, dimer; disulfide-linked. Highly expressed in spleen and kidney. Also detected at lower levels in liver, heart, brain, intestine and gill.

Its subcellular location is the secreted. The protein localises to the lysosome. In terms of biological role, lysosomal thiol reductase that can reduce protein disulfide bonds. May facilitate the complete unfolding of proteins destined for lysosomal degradation. Plays an important role in antigen processing. The sequence is that of Gamma-interferon-inducible lysosomal thiol reductase from Carassius auratus (Goldfish).